The following is a 589-amino-acid chain: Transcription factor MYC4 (589 aa).

A JAZ-interaction domain region spans residues 99-150 (NTVLLGWGDGYYKGEEEKSRKKKSNPASAAEQEHRKRVIRELNSLISGGVGG). Disordered stretches follow at residues 114-133 (EEKSRKKKSNPASAAEQEHR), 291-326 (AAPVMNNGGNDSTSNSDSQPISKLCNGSSVENPNPK), 340-359 (IENGQEEDSSNKKRSPVSNN), and 381-422 (ASVA…EAER). Positions 296 to 308 (NNGGNDSTSNSDS) are enriched in low complexity. Positions 309-322 (QPISKLCNGSSVEN) are enriched in polar residues. A compositionally biased stretch (basic and acidic residues) spans 381-398 (ASVAKEAESNRVVVEPEK). Positions 399 to 408 (KPRKRGRKPA) are enriched in basic residues. Over residues 409–422 (NGREEPLNHVEAER) the composition is skewed to basic and acidic residues. A bHLH domain is found at 412 to 461 (EEPLNHVEAERQRREKLNQRFYSLRAVVPNVSKMDKASLLGDAISYISEL).

As to quaternary structure, homo- and heterodimer. Interacts with MYB28, MYB29, MYB34, MYB51, MYB76, MYB122, MYC3, AFPH2/NINJA and the JAZ repressors TIFY10A/JAZ1, TIFY10B/JAZ2, TIFY6B/JAZ3, TIFY6A/JAZ4, TIFY11A/JAZ5, TIFY11B/JAZ6, TIFY5B/JAZ7, TIFY5A/JAZ8, TIFY7/JAZ9, TIFY9/JAZ10, TIFY3A/JAZ11 and TIFY3B/JAZ12. Expressed constitutively at low levels. Preferentially expressed in vascular tissues.

Its subcellular location is the nucleus. Transcription factor involved in jasmonic acid (JA) gene regulation. With MYC2 and MYC3, controls additively subsets of JA-dependent responses. Can form complexes with all known glucosinolate-related MYBs to regulate glucosinolate biosynthesis. Binds to the G-box (5'-CACGTG-3') of promoters. Activates multiple TIFY/JAZ promoters. This Arabidopsis thaliana (Mouse-ear cress) protein is Transcription factor MYC4 (MYC4).